A 396-amino-acid polypeptide reads, in one-letter code: S-adenosylmethionine synthase (396 aa).

Residue H16 participates in ATP binding. D18 contacts Mg(2+). Position 44 (E44) interacts with K(+). Residues E57 and Q100 each contribute to the L-methionine site. The segment at 100–110 is flexible loop; that stretch reads QSKDIALGVDK. Residues 176–178, 243–244, D252, 258–259, A275, and K279 each bind ATP; these read DGK, RF, and RK. D252 is a binding site for L-methionine. Residue K283 participates in L-methionine binding.

It belongs to the AdoMet synthase family. Homotetramer; dimer of dimers. Mg(2+) serves as cofactor. The cofactor is K(+).

The protein localises to the cytoplasm. It carries out the reaction L-methionine + ATP + H2O = S-adenosyl-L-methionine + phosphate + diphosphate. It participates in amino-acid biosynthesis; S-adenosyl-L-methionine biosynthesis; S-adenosyl-L-methionine from L-methionine: step 1/1. Its function is as follows. Catalyzes the formation of S-adenosylmethionine (AdoMet) from methionine and ATP. The overall synthetic reaction is composed of two sequential steps, AdoMet formation and the subsequent tripolyphosphate hydrolysis which occurs prior to release of AdoMet from the enzyme. This chain is S-adenosylmethionine synthase, found in Lachnoclostridium phytofermentans (strain ATCC 700394 / DSM 18823 / ISDg) (Clostridium phytofermentans).